A 121-amino-acid chain; its full sequence is Large ribosomal subunit protein bL19 (121 aa).

This sequence belongs to the bacterial ribosomal protein bL19 family.

This protein is located at the 30S-50S ribosomal subunit interface and may play a role in the structure and function of the aminoacyl-tRNA binding site. In Chlorobium phaeobacteroides (strain BS1), this protein is Large ribosomal subunit protein bL19.